Here is a 302-residue protein sequence, read N- to C-terminus: Probable E3 ubiquitin-protein ligase RZFP34 (302 aa).

The CHY-type zinc-finger motif lies at 54–130 (EGIMQYGCAH…VRQVCISCGV (77 aa)). Positions 61, 63, 74, 75, 81, 84, 85, 100, 112, 115, 125, 128, 137, 140, 153, 154, 157, 160, 170, 171, 174, 177, 186, and 188 each coordinate Zn(2+). The CTCHY-type zinc finger occupies 132–196 (MGKYFCEVCK…ACVEGAMHHD (65 aa)). The segment at 197 to 240 (CPICFEYLFESTNDVSVLPCGHTIHVKCLREMEEHCQFACPLCS) adopts an RING-type; atypical zinc-finger fold.

The protein resides in the nucleus. The catalysed reaction is S-ubiquitinyl-[E2 ubiquitin-conjugating enzyme]-L-cysteine + [acceptor protein]-L-lysine = [E2 ubiquitin-conjugating enzyme]-L-cysteine + N(6)-ubiquitinyl-[acceptor protein]-L-lysine.. It functions in the pathway protein modification; protein ubiquitination. In terms of biological role, possesses transactivation activity in yeast cells. Involved in the regulation of stomatal aperture. May modulate the expression of genes that control stomata opening during heat shock or drought stress. The chain is Probable E3 ubiquitin-protein ligase RZFP34 from Oryza sativa subsp. japonica (Rice).